A 103-amino-acid polypeptide reads, in one-letter code: MSKEYRGRRIVLWPANIDSTLSRSEGRKIPLRDAVRKPRVEEIVEAANRLGLNPTVEEAAYPRSWWEQRKRVVVDKVGSKLNTLRMIAQEVKKLREERRRLGK.

It belongs to the SRP19 family. In terms of assembly, part of the signal recognition particle protein translocation system, which is composed of SRP and FtsY. Archaeal SRP consists of a 7S RNA molecule of 300 nucleotides and two protein subunits: SRP54 and SRP19.

The protein localises to the cytoplasm. In terms of biological role, involved in targeting and insertion of nascent membrane proteins into the cytoplasmic membrane. Binds directly to 7S RNA and mediates binding of the 54 kDa subunit of the SRP. The polypeptide is Signal recognition particle 19 kDa protein (Hyperthermus butylicus (strain DSM 5456 / JCM 9403 / PLM1-5)).